We begin with the raw amino-acid sequence, 117 residues long: MPRPYKCRRISEIPKVAYYKPAGIPLSMLEENQLSTEEAEALRLKDLLGLEQAQAALQMNISRPTFQRMLYSARYKVADALLNGKALRIEGGVFEIDARPCCQRQTPSCQPDPPKQT.

This sequence belongs to the UPF0251 family.

In Dehalococcoides mccartyi (strain ATCC BAA-2100 / JCM 16839 / KCTC 5957 / BAV1), this protein is UPF0251 protein DehaBAV1_0135.